The sequence spans 415 residues: Serine hydroxymethyltransferase (415 aa).

Residues Leu-122 and Gly-126–Leu-128 contribute to the (6S)-5,6,7,8-tetrahydrofolate site. Lys-230 carries the post-translational modification N6-(pyridoxal phosphate)lysine.

It belongs to the SHMT family. Homodimer. Requires pyridoxal 5'-phosphate as cofactor.

It localises to the cytoplasm. It catalyses the reaction (6R)-5,10-methylene-5,6,7,8-tetrahydrofolate + glycine + H2O = (6S)-5,6,7,8-tetrahydrofolate + L-serine. It participates in one-carbon metabolism; tetrahydrofolate interconversion. Its pathway is amino-acid biosynthesis; glycine biosynthesis; glycine from L-serine: step 1/1. Catalyzes the reversible interconversion of serine and glycine with tetrahydrofolate (THF) serving as the one-carbon carrier. This reaction serves as the major source of one-carbon groups required for the biosynthesis of purines, thymidylate, methionine, and other important biomolecules. Also exhibits THF-independent aldolase activity toward beta-hydroxyamino acids, producing glycine and aldehydes, via a retro-aldol mechanism. In Ralstonia pickettii (strain 12J), this protein is Serine hydroxymethyltransferase.